The primary structure comprises 125 residues: Calcitonin receptor-stimulating peptide 1 (125 aa).

The N-terminal stretch at 1–25 (MGFWKFPPFLVLSILVLYQAGMFHA) is a signal peptide. Positions 26–77 (APFRSVFDGRFDPATLDEEESRLLLAAMVNDYEQMRARESEKAQKTEGSRIQ) are excised as a propeptide. Cys81 and Cys86 are joined by a disulfide.

This sequence belongs to the calcitonin family.

It is found in the secreted. Stimulates cAMP production in porcine kidney cell line LLC-PK1 via the calcitonin receptor (CT) but not via the CT-like (CL) receptor. The polypeptide is Calcitonin receptor-stimulating peptide 1 (CRSP1) (Bos taurus (Bovine)).